We begin with the raw amino-acid sequence, 294 residues long: Ribosomal RNA small subunit methyltransferase I (294 aa).

The protein belongs to the methyltransferase superfamily. RsmI family.

It localises to the cytoplasm. It carries out the reaction cytidine(1402) in 16S rRNA + S-adenosyl-L-methionine = 2'-O-methylcytidine(1402) in 16S rRNA + S-adenosyl-L-homocysteine + H(+). In terms of biological role, catalyzes the 2'-O-methylation of the ribose of cytidine 1402 (C1402) in 16S rRNA. The sequence is that of Ribosomal RNA small subunit methyltransferase I from Mesorhizobium japonicum (strain LMG 29417 / CECT 9101 / MAFF 303099) (Mesorhizobium loti (strain MAFF 303099)).